The following is a 93-amino-acid chain: MASGQQERSQLDRKAREGETVVPGGTGGKSLEAHENLAEGRSRGGQTRREQMGEEGYSEMGRKGGLSTNDESGGERAAREGIDIDESKFKTKS.

Positions 1 to 93 (MASGQQERSQ…IDESKFKTKS (93 aa)) are disordered. Basic and acidic residues-rich tracts occupy residues 9 to 19 (SQLDRKAREGE), 31 to 52 (LEAH…REQM), and 73 to 93 (GGER…KTKS).

Belongs to the small hydrophilic plant seed protein family.

Functionally, it is thought to provide protection for the cytoplasm during the desiccation stage of embryo development. This chain is Em protein H2 (EMH2), found in Triticum aestivum (Wheat).